Reading from the N-terminus, the 92-residue chain is Small ribosomal subunit protein uS19 (92 aa).

Belongs to the universal ribosomal protein uS19 family.

Functionally, protein S19 forms a complex with S13 that binds strongly to the 16S ribosomal RNA. In Aeromonas hydrophila subsp. hydrophila (strain ATCC 7966 / DSM 30187 / BCRC 13018 / CCUG 14551 / JCM 1027 / KCTC 2358 / NCIMB 9240 / NCTC 8049), this protein is Small ribosomal subunit protein uS19.